The following is a 416-amino-acid chain: UDP-N-acetylglucosamine 1-carboxyvinyltransferase (416 aa).

A phosphoenolpyruvate-binding site is contributed by 22–23 (KN). Arginine 92 contacts UDP-N-acetyl-alpha-D-glucosamine. Cysteine 116 (proton donor) is an active-site residue. 2-(S-cysteinyl)pyruvic acid O-phosphothioketal is present on cysteine 116. UDP-N-acetyl-alpha-D-glucosamine is bound by residues 121–125 (RPVDQ), aspartate 304, and isoleucine 326.

It belongs to the EPSP synthase family. MurA subfamily.

The protein localises to the cytoplasm. It carries out the reaction phosphoenolpyruvate + UDP-N-acetyl-alpha-D-glucosamine = UDP-N-acetyl-3-O-(1-carboxyvinyl)-alpha-D-glucosamine + phosphate. Its pathway is cell wall biogenesis; peptidoglycan biosynthesis. Its function is as follows. Cell wall formation. Adds enolpyruvyl to UDP-N-acetylglucosamine. In Cupriavidus taiwanensis (strain DSM 17343 / BCRC 17206 / CCUG 44338 / CIP 107171 / LMG 19424 / R1) (Ralstonia taiwanensis (strain LMG 19424)), this protein is UDP-N-acetylglucosamine 1-carboxyvinyltransferase.